Consider the following 314-residue polypeptide: tRNA dimethylallyltransferase (314 aa).

6 to 13 (GPTAVGKT) is a binding site for ATP. 8-13 (TAVGKT) serves as a coordination point for substrate. Residues 31–34 (DSRQ) form an interaction with substrate tRNA region.

It belongs to the IPP transferase family. As to quaternary structure, monomer. It depends on Mg(2+) as a cofactor.

It carries out the reaction adenosine(37) in tRNA + dimethylallyl diphosphate = N(6)-dimethylallyladenosine(37) in tRNA + diphosphate. Catalyzes the transfer of a dimethylallyl group onto the adenine at position 37 in tRNAs that read codons beginning with uridine, leading to the formation of N6-(dimethylallyl)adenosine (i(6)A). This is tRNA dimethylallyltransferase from Pseudothermotoga lettingae (strain ATCC BAA-301 / DSM 14385 / NBRC 107922 / TMO) (Thermotoga lettingae).